The chain runs to 194 residues: 5-formyltetrahydrofolate cyclo-ligase (194 aa).

Residues 6–10, 139–146, and Asp177 each bind ATP; these read KSQLR and GRGAGFYD.

This sequence belongs to the 5-formyltetrahydrofolate cyclo-ligase family.

The enzyme catalyses (6S)-5-formyl-5,6,7,8-tetrahydrofolate + ATP = (6R)-5,10-methenyltetrahydrofolate + ADP + phosphate. It functions in the pathway one-carbon metabolism; tetrahydrofolate interconversion. Involved in the removal of 5-formyltetrahydrofolate. In vitro, it is a potent inhibitor of various folate-dependent enzymes in the C1 metabolism network and in vivo it might function as a folate storage. 5-formyltetrahydrofolate is also used as an antifolate rescue agent in cancer chemotherapy. Catalyzes the irreversible ATP-dependent transformation of 5-formyltetrahydrofolate (5-CHO-THF) to form 5,10-methenyltetrahydrofolate (5,10-CH=THF). The reverse reaction is catalyzed by the serine hydroxymethyltransferase GlyA (SHMT). This is 5-formyltetrahydrofolate cyclo-ligase from Mycolicibacterium smegmatis (strain ATCC 700084 / mc(2)155) (Mycobacterium smegmatis).